The sequence spans 329 residues: SLAM family member 5 (329 aa).

A signal peptide spans 1-21; that stretch reads MAQRHLWIWFLCLQTWSEAAG. Topologically, residues 22–221 are extracellular; it reads KDADPMVMNG…TPSFHPRHAV (200 aa). An Ig-like V-type domain is found at 26–129; sequence PMVMNGILGE…IYYLHIYRRL (104 aa). Positions 132 to 206 constitute an Ig-like C2-type domain; the sequence is PKITQSLISS…SNSSDSVTVQ (75 aa). The N-linked (GlcNAc...) asparagine glycan is linked to Asn147. An intrachain disulfide couples Cys152 to Cys190. A helical transmembrane segment spans residues 222-242; the sequence is LPGGLAVLFLLILIPMLAFLF. The Cytoplasmic segment spans residues 243 to 329; sequence RLYKRRRDRI…PKALGNEIVV (87 aa). The ITSM 1 motif lies at 263 to 268; that stretch reads TVYAVV. Position 265 is a phosphotyrosine (Tyr265). Tyr280 carries the phosphotyrosine; by LYN modification. Residues 298-303 carry the ITSM 2 motif; it reads TIYSSV. Tyr300 is subject to Phosphotyrosine.

Homodimer; via its extracellular domain. Forms a head to tail dimer with a CD48 molecule from another cell. Interacts with SH2 domain-containing proteins SH2D1A/SAP and SH2D1B/EAT-2. Interacts with tyrosine-protein phosphatases PTPN6/SHP-1 and PTPN11/SHP-2 via its phosphorylated cytoplasmic domain, and this interaction is blocked by SH2D1A. In terms of processing, phosphorylated by tyrosine-protein kinase LCK on tyrosine residues following ligation induced by agonist monoclonal antibody. The association with SH2D1A/SAP is dependent of tyrosine phosphorylation of its cytoplasmic domain. Phosphorylated on Tyr-280 and Tyr-300 following platelet aggregation. Phosphorylated on tyrosine residues upon high affinity immunoglobulin epsilon receptor aggregation in mast cells. Post-translationally, N-glycosylated. As to expression, predominantly expressed in hematopoietic tissues such as lymph node, spleen, thymus, and bone marrow. Detected also in lung.

It localises to the cell membrane. Its function is as follows. Self-ligand receptor of the signaling lymphocytic activation molecule (SLAM) family. SLAM receptors triggered by homo- or heterotypic cell-cell interactions are modulating the activation and differentiation of a wide variety of immune cells and thus are involved in the regulation and interconnection of both innate and adaptive immune response. Activities are controlled by presence or absence of small cytoplasmic adapter proteins, SH2D1A/SAP and/or SH2D1B/EAT-2. Can mediate natural killer (NK) cell cytotoxicity dependent on SH2D1A and SH2D1B. Increases proliferative responses of activated T-cells and SH2D1A/SAP does not seen be required for this process. Homophilic interactions enhance interferon gamma/IFNG secretion in lymphocytes and induce platelet stimulation via a SH2D1A/SAP-dependent pathway. May serve as a marker for hematopoietic progenitor cells. Required for a prolonged T-cell:B-cell contact, optimal T follicular helper function, and germinal center formation. In germinal centers involved in maintaining B cell tolerance and in preventing autoimmunity. In mast cells negatively regulates high affinity immunoglobulin epsilon receptor signaling; independent of SH2D1A and SH2D1B but implicating FES and PTPN6/SHP-1. In macrophages enhances LPS-induced MAPK phosphorylation and NF-kappaB activation and modulates LPS-induced cytokine secretion; involving ITSM 2. Positively regulates macroautophagy in primary dendritic cells via stabilization of IRF8; inhibits TRIM21-mediated proteasomal degradation of IRF8. This Mus musculus (Mouse) protein is SLAM family member 5 (Cd84).